The following is a 501-amino-acid chain: Sucrose transport protein SUT2 (501 aa).

The Cytoplasmic portion of the chain corresponds to 1 to 31; the sequence is MPRRPSGGGGGAGPAAAAVRKVPLRKLLRAA. A helical transmembrane segment spans residues 32-52; the sequence is SVACGVQFGWALQLSLLTPYV. The Extracellular portion of the chain corresponds to 53-55; that stretch reads QEL. Residues 56 to 76 form a helical membrane-spanning segment; sequence GIPHAFASLVWLCGPLSGLLV. Residues 77–98 are Cytoplasmic-facing; sequence QPLVGHLSDRIAPAASPLGRRR. A helical membrane pass occupies residues 99 to 119; that stretch reads PFIAAGAASIAAAVLTVGFSA. Over 120-135 the chain is Extracellular; that stretch reads DLGRIFGDSITPGSTR. The helical transmembrane segment at 136 to 156 threads the bilayer; sequence LGAIIVYLVGFWLLDVGNNAT. The Cytoplasmic segment spans residues 157–176; the sequence is QGPCRAFLADLTENDPRRTR. Residues 177 to 197 form a helical membrane-spanning segment; that stretch reads IANAYFSLFMALGNILGYATG. Residues 198 to 222 lie on the Extracellular side of the membrane; it reads AYSGWYKIFPFTVTPSCSISCANLK. The helical transmembrane segment at 223–243 threads the bilayer; sequence SAFLLDIIILVVTTCITVASV. At 244 to 278 the chain is on the cytoplasmic side; the sequence is QEPQSFGSDEADHPSTEQEAFLWELFGSFRYFTLP. The helical transmembrane segment at 279-299 threads the bilayer; sequence VWMVLIVTALTWIGWFPFILF. The Extracellular portion of the chain corresponds to 300-327; that stretch reads DTDWMGREIYRGSPDDPSITQSYHDGVR. A helical membrane pass occupies residues 328–348; the sequence is MGSFGLMLNSVLLGFTSIVLE. Residues 349-356 are Cytoplasmic-facing; it reads KLCRKWGA. The chain crosses the membrane as a helical span at residues 357–377; that stretch reads GLVWGVSNILMALCFVAMLVI. The Extracellular portion of the chain corresponds to 378–394; sequence TYVAKNMDYPPSGVPPT. The chain crosses the membrane as a helical span at residues 395-415; that stretch reads GIVIASLVVFTILGAPLAITY. Residues 416 to 433 are Cytoplasmic-facing; sequence SIPYAMAASRVENLGLGQ. The chain crosses the membrane as a helical span at residues 434–454; the sequence is GLAMGILNLAIVIPQVIVSLG. Over 455–467 the chain is Extracellular; the sequence is SGPWDQLFGGGNA. The helical transmembrane segment at 468–488 threads the bilayer; that stretch reads PAFAVAAAASFIGGLVAILGL. Residues 489–501 are Cytoplasmic-facing; it reads PRARIASRRRGHR.

This sequence belongs to the glycoside-pentoside-hexuronide (GPH) cation symporter transporter (TC 2.A.2.4) family. Homodimer. Widely expressed.

It is found in the cell membrane. It participates in glycan biosynthesis; sucrose metabolism. Responsible for the transport of sucrose into the cell, with the concomitant uptake of protons (symport system). May also transport other glucosides. The protein is Sucrose transport protein SUT2 (SUT2) of Oryza sativa subsp. japonica (Rice).